The chain runs to 325 residues: MSKAKITAIGTYAPSRRLTNADLEKIVDTSDEWIVQRTGMRERRIADEHQFTSDLCIEAVKNLKSRYKGTLDDVDMILVATTTSDYAFPSTACRVQEYFGWESTGALDINATCAGLTYGLHLANGLITSGLHQKILVIAGETLSKVTDYTDRTTCVLFGDAAGALLVERDEETPGFLASVQGTSGNGGDILYRAGLRNEINGVQLVGSGKMVQNGREVYKWAARTVPGEFERLLHKAGLSSDDLDWFVPHSANLRMIESICEKTPFPIEKTLTSVEHYGNTSSVSIVLALDLAVKAGKLKKDQIVLLFGFGGGLTYTGLLIKWGM.

Active-site residues include C113 and H250. The tract at residues 251–255 is ACP-binding; it reads SANLR. The active site involves N280.

The protein belongs to the thiolase-like superfamily. FabH family. Homodimer.

It is found in the cytoplasm. It catalyses the reaction 3-methylbutanoyl-CoA + malonyl-[ACP] + H(+) = 5-methyl-3-oxohexanoyl-[ACP] + CO2 + CoA. It carries out the reaction 2-methylpropanoyl-CoA + malonyl-[ACP] + H(+) = 4-methyl-3-oxopentanoyl-[ACP] + CO2 + CoA. The enzyme catalyses (2S)-2-methylbutanoyl-CoA + malonyl-[ACP] + H(+) = (4S)-4-methyl-3-oxohexanoyl-[ACP] + CO2 + CoA. The catalysed reaction is malonyl-[ACP] + acetyl-CoA + H(+) = 3-oxobutanoyl-[ACP] + CO2 + CoA. It catalyses the reaction malonyl-[ACP] + propanoyl-CoA + H(+) = 3-oxopentanoyl-[ACP] + CO2 + CoA. It carries out the reaction butanoyl-CoA + malonyl-[ACP] + H(+) = 3-oxohexanoyl-[ACP] + CO2 + CoA. The enzyme catalyses pentanoyl-CoA + malonyl-[ACP] + H(+) = 3-oxoheptanoyl-[ACP] + CO2 + CoA. The catalysed reaction is hexanoyl-CoA + malonyl-[ACP] + H(+) = 3-oxooctanoyl-[ACP] + CO2 + CoA. It catalyses the reaction heptanoyl-CoA + malonyl-[ACP] + H(+) = 3-oxononanoyl-[ACP] + CO2 + CoA. It participates in lipid metabolism; fatty acid biosynthesis. Its function is as follows. Catalyzes the condensation reaction of fatty acid synthesis by the addition to an acyl acceptor of two carbons from malonyl-ACP. Catalyzes the first condensation reaction which initiates fatty acid synthesis and may therefore play a role in governing the total rate of fatty acid production. Possesses both acetoacetyl-ACP synthase and acetyl transacylase activities. Has some substrate specificity for branched chain acyl-CoA, determining the biosynthesis of branched-chain of fatty acids instead of straight-chain. This chain is Beta-ketoacyl-[acyl-carrier-protein] synthase III 2, found in Bacillus subtilis (strain 168).